The following is a 193-amino-acid chain: LOB domain-containing protein 12 (193 aa).

One can recognise an LOB domain in the interval 7–108 (SPCASCKLLR…MQLAVAQAEI (102 aa)).

It belongs to the LOB domain-containing protein family. In terms of tissue distribution, expressed predominantly in roots, and at low levels in shoots, floral stems and open flowers.

In Arabidopsis thaliana (Mouse-ear cress), this protein is LOB domain-containing protein 12 (LBD12).